We begin with the raw amino-acid sequence, 651 residues long: MIAAVYTLFFFFLLISSVYSKATISISPQTLNRSGDIVVIKWSGVESPSDLDWLGIYSPPDSPHDHFIGYKFLSDSPTWQSGSGSISLPLTNLRSNYTFRIFHWTQSEINPKHQDHDHNPLPGTRHLLTESNQLNFRFAVNRPEQIHLSYTDNINEMRVVFVTGDGEEREARYGEVKDKLDNIAVARGVRYEIEHMCHAPANSTVGWRDPGWTFDAVMKNLKQGIRYYYQVGSDLKGWSEIHSFVSRNEGSEETLAFMFGDMGCYTPYTTFIRGEEESLSTVKWILRDIEALGDDKPVIVSHIGDISYARGYSWIWDEFFTQIEPIASKVPYHVCIGNHEYDWPNQPWKPDWAAYVYGKDSGGECGVPYSVKFNMPGNSTEATGMVKGPQSRNLYYSYDMGSVHFVYISTETDFLKGGKQYSFLKSDLESVNRSKTPFVVVQGHRPMYTTSRKIRDAAIREKMIEHLEPLLVKNNVTVALWGHVHRYERFCAISNNTCGERWQGNPVHLVIGMAGKDSQPMWEPRANHEDVPIFPQPANSMYRGGEFGYIRLVANKERLTLSYVGNHDGEVHDVVEILASGEVISGSDDGTKDSNFGSESDFAVLWYIEGASVMVVGVIFGYFVGFLSRKKKESGVGSSNRSWIQVKNEET.

Residues 1–20 (MIAAVYTLFFFFLLISSVYS) form the signal peptide. 3 N-linked (GlcNAc...) asparagine glycosylation sites follow: asparagine 32, asparagine 96, and asparagine 202. The Fe cation site is built by aspartate 305 and tyrosine 308. Aspartate 305 is a binding site for Zn(2+). A Zn(2+)-binding site is contributed by asparagine 338. A substrate-binding site is contributed by asparagine 338. N-linked (GlcNAc...) asparagine glycosylation is found at asparagine 378 and asparagine 432. Histidine 444 is a binding site for Zn(2+). An N-linked (GlcNAc...) asparagine glycan is attached at asparagine 475. A Zn(2+)-binding site is contributed by histidine 483. 483-485 (HVH) serves as a coordination point for substrate. Histidine 485 contributes to the Fe cation binding site. Asparagine 495 and asparagine 640 each carry an N-linked (GlcNAc...) asparagine glycan.

This sequence belongs to the metallophosphoesterase superfamily. Purple acid phosphatase family. In terms of assembly, homodimer. Requires Fe cation as cofactor. The cofactor is Zn(2+). In terms of tissue distribution, expressed in roots, stems, leaves, flowers and siliques.

Its subcellular location is the secreted. The chain is Probable inactive purple acid phosphatase 9 (PAP9) from Arabidopsis thaliana (Mouse-ear cress).